The primary structure comprises 137 residues: Bet1-like protein At4g14600 (137 aa).

Residues 1–113 lie on the Cytoplasmic side of the membrane; the sequence is MASNPHRSGA…MSIIRSGNNH (113 aa). One can recognise a t-SNARE coiled-coil homology domain in the interval 43–105; it reads DPMHSDLDDE…KNNIRKLNMS (63 aa). The chain crosses the membrane as a helical; Anchor for type IV membrane protein span at residues 114–134; sequence IMHVVLFALLVFFVLYIWSKM. Residues 135 to 137 lie on the Vesicular side of the membrane; the sequence is FKR.

The protein belongs to the BET1 family.

It localises to the golgi apparatus membrane. The protein resides in the endoplasmic reticulum membrane. Its function is as follows. Required for vesicular transport from the ER to the Golgi complex. Functions as a SNARE associated with ER-derived vesicles. The polypeptide is Bet1-like protein At4g14600 (Arabidopsis thaliana (Mouse-ear cress)).